The chain runs to 659 residues: Pentatricopeptide repeat-containing protein At3g26782, mitochondrial (659 aa).

Residues 1–24 constitute a mitochondrion transit peptide; that stretch reads MKVRSKKALFCSVSRLLHTERHTE. 12 PPR repeats span residues 40–74, 75–109, 110–144, 145–171, 182–216, 217–249, 250–284, 286–320, 321–351, 352–386, 387–422, and 423–453; these read DVFS…SLYP, TRSS…GYQS, DIFV…NIVS, WTSM…LLVD, DSMG…GFDR, GVSV…IVDK, DRVS…KVVT, NAIT…GLED, DVIV…MKNK, NVRS…GVRP, NYIT…GVEP, and GLEH…MKMK. Residues 458 to 533 are type E motif; it reads IWSSLLAACR…PPGFSLLELN (76 aa). A type E(+) motif region spans residues 534 to 564; that stretch reads GEVHVFLIGDEEHPQREKIYEFLAELNRKLL. Residues 565-659 form a type DYW motif region; sequence EAGYVSNTSS…DGGCSCGDYW (95 aa).

The protein belongs to the PPR family. PCMP-H subfamily.

The protein localises to the mitochondrion. This is Pentatricopeptide repeat-containing protein At3g26782, mitochondrial (PCMP-H34) from Arabidopsis thaliana (Mouse-ear cress).